The sequence spans 445 residues: Phosphoglucosamine mutase 1 (445 aa).

Catalysis depends on serine 102, which acts as the Phosphoserine intermediate. Serine 102, aspartate 241, aspartate 243, and aspartate 245 together coordinate Mg(2+). Serine 102 is subject to Phosphoserine.

This sequence belongs to the phosphohexose mutase family. Requires Mg(2+) as cofactor. Activated by phosphorylation.

The enzyme catalyses alpha-D-glucosamine 1-phosphate = D-glucosamine 6-phosphate. In terms of biological role, catalyzes the conversion of glucosamine-6-phosphate to glucosamine-1-phosphate. This chain is Phosphoglucosamine mutase 1, found in Shewanella baltica (strain OS185).